The chain runs to 245 residues: MAPK-interacting and spindle-stabilizing protein-like (245 aa).

The tract at residues 1 to 245 is disordered; sequence MSDEFSLADA…PMPGGPHSYH (245 aa). At Ser2 the chain carries N-acetylserine. Ser2, Ser6, and Ser15 each carry phosphoserine. Over residues 17-26 the composition is skewed to polar residues; that stretch reads AKTSAVSNTK. Over residues 34–51 the composition is skewed to low complexity; the sequence is WPGSNPWNNPSAPSSVPS. Pro residues-rich tracts occupy residues 74–127, 164–190, and 198–207; these read SVPP…PELP, PNMPYPSPGPYPAPPPPQAPGAAPPVP, and AWGPPAPYPA.

It belongs to the MISS family.

This is MAPK-interacting and spindle-stabilizing protein-like (MAPK1IP1L) from Homo sapiens (Human).